Consider the following 179-residue polypeptide: Nucleoside-triphosphatase THEP1 (179 aa).

Residues 7–14 and 94–101 each bind ATP; these read GRPGVGKT and LIIVDEIG.

This sequence belongs to the THEP1 NTPase family.

The catalysed reaction is a ribonucleoside 5'-triphosphate + H2O = a ribonucleoside 5'-diphosphate + phosphate + H(+). Functionally, has nucleotide phosphatase activity towards ATP, GTP, CTP, TTP and UTP. May hydrolyze nucleoside diphosphates with lower efficiency. The polypeptide is Nucleoside-triphosphatase THEP1 (Thermotoga petrophila (strain ATCC BAA-488 / DSM 13995 / JCM 10881 / RKU-1)).